Here is a 181-residue protein sequence, read N- to C-terminus: Large ribosomal subunit protein uL10 (181 aa).

This sequence belongs to the universal ribosomal protein uL10 family. Part of the ribosomal stalk of the 50S ribosomal subunit. The N-terminus interacts with L11 and the large rRNA to form the base of the stalk. The C-terminus forms an elongated spine to which L12 dimers bind in a sequential fashion forming a multimeric L10(L12)X complex.

Functionally, forms part of the ribosomal stalk, playing a central role in the interaction of the ribosome with GTP-bound translation factors. This is Large ribosomal subunit protein uL10 from Amoebophilus asiaticus (strain 5a2).